A 185-amino-acid chain; its full sequence is Iron-sulfur assembly protein 2 (185 aa).

Fe cation contacts are provided by cysteine 89, cysteine 175, and cysteine 177.

It belongs to the HesB/IscA family.

The protein resides in the mitochondrion matrix. Involved in the assembly of mitochondrial and cytoplasmic iron-sulfur proteins. Probably involved in the binding of an intermediate of Fe/S cluster assembly. This is Iron-sulfur assembly protein 2 (ISA2) from Saccharomyces cerevisiae (strain ATCC 204508 / S288c) (Baker's yeast).